A 701-amino-acid chain; its full sequence is Octapeptide-repeat antigen (701 aa).

Asparagine 40, asparagine 41, asparagine 76, asparagine 111, asparagine 127, asparagine 139, asparagine 181, asparagine 189, asparagine 311, asparagine 334, asparagine 344, asparagine 477, and asparagine 557 each carry an N-linked (GlcNAc...) asparagine glycan. The tract at residues 120–140 (IENEEKSNGSRKSSNKQKYNE) is disordered. The disordered stretch occupies residues 641–701 (LSGSSTGSMN…IKSGSKDHIK (61 aa)). Over residues 642 to 655 (SGSSTGSMNNGKSG) the composition is skewed to low complexity. 6 consecutive repeat copies span residues 653–660 (KSGSKSDI), 661–668 (KGGSKDDI), 669–676 (KSGSKDDI), 677–684 (KSGSKADI), 685–692 (KSGSKDDI), and 693–700 (KSGSKDHI). Residues 653-700 (KSGSKSDIKGGSKDDIKSGSKDDIKSGSKADIKSGSKDDIKSGSKDHI) are 6 X 8 AA approximate tandem repeats. Residues 656 to 701 (SKSDIKGGSKDDIKSGSKDDIKSGSKADIKSGSKDDIKSGSKDHIK) show a composition bias toward basic and acidic residues.

It belongs to the ATP-dependent AMP-binding enzyme family.

The protein resides in the parasitophorous vacuole. In Plasmodium falciparum (isolate NF7 / Ghana), this protein is Octapeptide-repeat antigen.